A 149-amino-acid polypeptide reads, in one-letter code: SsrA-binding protein (149 aa).

Residues 123 to 149 (KQFDKRETEKQRDWQREKARIMKGGKE) form a disordered region.

This sequence belongs to the SmpB family.

It is found in the cytoplasm. Its function is as follows. Required for rescue of stalled ribosomes mediated by trans-translation. Binds to transfer-messenger RNA (tmRNA), required for stable association of tmRNA with ribosomes. tmRNA and SmpB together mimic tRNA shape, replacing the anticodon stem-loop with SmpB. tmRNA is encoded by the ssrA gene; the 2 termini fold to resemble tRNA(Ala) and it encodes a 'tag peptide', a short internal open reading frame. During trans-translation Ala-aminoacylated tmRNA acts like a tRNA, entering the A-site of stalled ribosomes, displacing the stalled mRNA. The ribosome then switches to translate the ORF on the tmRNA; the nascent peptide is terminated with the 'tag peptide' encoded by the tmRNA and targeted for degradation. The ribosome is freed to recommence translation, which seems to be the essential function of trans-translation. This Cupriavidus taiwanensis (strain DSM 17343 / BCRC 17206 / CCUG 44338 / CIP 107171 / LMG 19424 / R1) (Ralstonia taiwanensis (strain LMG 19424)) protein is SsrA-binding protein.